The sequence spans 122 residues: Large ribosomal subunit protein uL14c (122 aa).

Belongs to the universal ribosomal protein uL14 family. Part of the 50S ribosomal subunit.

Its subcellular location is the plastid. The protein resides in the chloroplast. Its function is as follows. Binds to 23S rRNA. The chain is Large ribosomal subunit protein uL14c from Porphyra purpurea (Red seaweed).